Consider the following 560-residue polypeptide: uncharacterized protein (560 aa).

The N-terminal stretch at 1-29 (MKSALKKSVVSTSISLILASGMAAFAAHA) is a signal peptide. 3 residues coordinate Ca(2+): aspartate 66, aspartate 67, and serine 132. The active-site Nucleophile is serine 132. Serine 132 carries the 3-oxoalanine (Ser) modification. Histidine 185 is an active-site residue. Ca(2+) contacts are provided by aspartate 345 and asparagine 346.

The protein belongs to the sulfatase family. It depends on Ca(2+) as a cofactor. In terms of processing, the conversion to 3-oxoalanine (also known as C-formylglycine, FGly), of a serine or cysteine residue in prokaryotes and of a cysteine residue in eukaryotes, is critical for catalytic activity.

This is an uncharacterized protein from Escherichia coli (strain K12).